The following is a 972-amino-acid chain: Nuclear factor NF-kappa-B p105 subunit (972 aa).

The 208-residue stretch at 39 to 246 (ADGPYLQILE…DAIYDSKAPN (208 aa)) folds into the RHD domain. C61 is modified (S-nitrosocysteine; alternate). C61 carries the S-(15-deoxy-Delta12,14-prostaglandin J2-9-yl)cysteine; alternate lipid modification. K325 participates in a covalent cross-link: Glycyl lysine isopeptide (Lys-Gly) (interchain with G-Cter in SUMO2). S337 bears the Phosphoserine; by PKA mark. A Nuclear localization signal motif is present at residues 360 to 365 (QRKRQK). The GRR stretch occupies residues 372-394 (DSFGGGSGAGAGGGGMFGSGGGG). The interval 425 to 473 (KSNAGMKHGTIDTPSKNDSEGCGKNVDREAVNLSGKVTEPTEQDKESSM) is disordered. Residues K431 and K440 each carry the N6-acetyllysine; by EP300 modification. The segment at 435–972 (IDTPSKNDSE…GQEGPIEGKI (538 aa)) is interaction with CFLAR. Residues 439 to 454 (SKNDSEGCGKNVDREA) are compositionally biased toward basic and acidic residues. ANK repeat units follow at residues 539–568 (NGDS…GLIS), 578–607 (LYQT…DLSL), 611–640 (LGNS…AALL), 647–676 (EGLN…DVNA), 681–711 (SGRT…HVDS), and 715–744 (DGTT…DPLV). Residues 647–681 (EGLNAIHIAVMSNSMPCLLLLVAAGADVNAQERKS) form an essential for interaction with HIF1AN region. N675 carries the (3S)-3-hydroxyasparagine; by HIF1AN modification. S756 is modified (phosphoserine). The stretch at 768 to 798 (PGTTPLDMATNWQVFDILNGKPYEPEFTSDD) is one ANK 7 repeat. The Death domain maps to 814–889 (LQLYKLLEIP…EAIEVIQAAF (76 aa)). The interval 894-926 (TAAPSPGKGAPQTLSLPLSSASTRSPVDEVRDD) is disordered. Residues 905 to 918 (QTLSLPLSSASTRS) show a composition bias toward polar residues. Phosphoserine; by GSK3-beta; in vitro occurs at positions 908 and 912. The residue at position 927 (S927) is a Phosphoserine. Phosphoserine; by IKKB occurs at positions 931 and 936. S941 carries the post-translational modification Phosphoserine. T947 is modified (phosphothreonine).

In terms of assembly, component of the NF-kappa-B p65-p50 complex. Homodimer; component of the NF-kappa-B p50-p50 complex. Component of the NF-kappa-B p105-p50 complex. Component of the NF-kappa-B p50-c-Rel complex. Component of a complex consisting of the NF-kappa-B p50-p50 homodimer and BCL3. Also interacts with MAP3K8. NF-kappa-B p50 subunit interacts with NCOA3 coactivator, which may coactivate NF-kappa-B dependent expression via its histone acetyltransferase activity. Interacts with TSC22D3; this interaction prevents nuclear translocation and DNA-binding. Interacts with SPAG9 and UNC5CL. NFKB1/p105 interacts with CFLAR; the interaction inhibits p105 processing into p50. NFKB1/p105 forms a ternary complex with MAP3K8 and TNIP2. Interacts with GSK3B; the interaction prevents processing of p105 to p50. NFKB1/p50 interacts with NFKBIE. NFKB1/p50 interacts with NFKBIZ. Nuclear factor NF-kappa-B p50 subunit interacts with NFKBID. Directly interacts with MEN1. Interacts with HIF1AN. Interacts with FEM1A; interaction is direct. Generation of the NF-kappa-B p50 (Nuclear factor NF-kappa-B p50 subunit) transcription factor takes place both cotranslationally and post-translationally via non-mutually exclusive mechanisms. A cotranslational processing allows the production of both p50 and p105 (Nuclear factor NF-kappa-B p105 subunit) from a single NFKB1 mRNA. While translation occurs, the particular unfolded structure after the GRR repeat region acts as a substrate for the proteasome, promoting degradation of the C-terminus. The GRR acts as a proteasomal 'stop signal', protecting the region upstream of the GRR from degradation and promoting generation of p50. It is unclear if limited proteasome degradation during cotranslational processing depends on ubiquitination. NF-kappa-B p50 is also generated post-translationally following ubiquitination by the KPC complex, leading to limited processing by the proteasome downstream of the GRR region, thereby generating p50. Post-translationally, phosphorylation at the C-terminus by IKBKB/IKKB acts as a signal for ubiquitination and promotes either complete degradation or processing to generate the NF-kappa-B p50 (Nuclear factor NF-kappa-B p50 subunit). Phosphorylation at Ser-908 and Ser-912 primes p105 for proteolytic processing in response to TNF-alpha stimulation. Phosphorylation at Ser-927, Ser-931 and Ser-936 are required for BTRC/BTRCP-mediated ubiquitination and proteolysis. Phosphorylation at Ser-931 is also required for ubiquitination by the KPC complex and limited processing to generate NF-kappa-B p50 (Nuclear factor NF-kappa-B p50 subunit). In terms of processing, polyubiquitinated at multiple Lys residues in the C-terminus. Polyubiquitinated by the SCF(FBXW11) and SCF(BTRC) complexes following phosphorylation at Ser-923, Ser-927, Ser-931 and Ser-936, leading to its complete degradation. In contrast, polyubiquitination by the KPC complex following phosphorylation at Ser-931 leads to limited proteosomal processing and generation of the active NF-kappa-B p50 (Nuclear factor NF-kappa-B p50 subunit). S-nitrosylation of Cys-61 affects DNA binding. Post-translationally, the covalent modification of cysteine by 15-deoxy-Delta12,14-prostaglandin-J2 is autocatalytic and reversible. It may occur as an alternative to other cysteine modifications, such as S-nitrosylation and S-palmitoylation.

Its subcellular location is the cytoplasm. The protein resides in the nucleus. In terms of biological role, NF-kappa-B is a pleiotropic transcription factor present in almost all cell types and is the endpoint of a series of signal transduction events that are initiated by a vast array of stimuli related to many biological processes such as inflammation, immunity, differentiation, cell growth, tumorigenesis and apoptosis. NF-kappa-B is a homo- or heterodimeric complex formed by the Rel-like domain-containing proteins RELA/p65, RELB, NFKB1/p105, NFKB1/p50, REL and NFKB2/p52 and the heterodimeric p65-p50 complex appears to be most abundant one. The dimers bind at kappa-B sites in the DNA of their target genes and the individual dimers have distinct preferences for different kappa-B sites that they can bind with distinguishable affinity and specificity. Different dimer combinations act as transcriptional activators or repressors, respectively. NF-kappa-B is controlled by various mechanisms of post-translational modification and subcellular compartmentalization as well as by interactions with other cofactors or corepressors. NF-kappa-B complexes are held in the cytoplasm in an inactive state complexed with members of the NF-kappa-B inhibitor (I-kappa-B) family. In a conventional activation pathway, I-kappa-B is phosphorylated by I-kappa-B kinases (IKKs) in response to different activators, subsequently degraded thus liberating the active NF-kappa-B complex which translocates to the nucleus. NF-kappa-B heterodimeric p65-p50 and RelB-p50 complexes are transcriptional activators. The NF-kappa-B p50-p50 homodimer is a transcriptional repressor, but can act as a transcriptional activator when associated with BCL3. NFKB1 appears to have dual functions such as cytoplasmic retention of attached NF-kappa-B proteins by p105 and generation of p50 by a cotranslational processing. The proteasome-mediated process ensures the production of both p50 and p105 and preserves their independent function, although processing of NFKB1/p105 also appears to occur post-translationally. p50 binds to the kappa-B consensus sequence 5'-GGRNNYYCC-3', located in the enhancer region of genes involved in immune response and acute phase reactions. In a complex with MAP3K8, NFKB1/p105 represses MAP3K8-induced MAPK signaling; active MAP3K8 is released by proteasome-dependent degradation of NFKB1/p105. Functionally, P105 is the precursor of the active p50 subunit (Nuclear factor NF-kappa-B p50 subunit) of the nuclear factor NF-kappa-B. Acts as a cytoplasmic retention of attached NF-kappa-B proteins by p105. Constitutes the active form, which associates with RELA/p65 to form the NF-kappa-B p65-p50 complex to form a transcription factor. Together with RELA/p65, binds to the kappa-B consensus sequence 5'-GGRNNYYCC-3', located in the enhancer region of genes involved in immune response and acute phase reactions. The chain is Nuclear factor NF-kappa-B p105 subunit (NFKB1) from Canis lupus familiaris (Dog).